Consider the following 457-residue polypeptide: Mannose-6-phosphate isomerase (457 aa).

Zn(2+) is bound by residues Gln108, His110, Glu135, and His292. Residue Arg311 is part of the active site.

Belongs to the mannose-6-phosphate isomerase type 1 family. Zn(2+) serves as cofactor.

The protein localises to the cytoplasm. The catalysed reaction is D-mannose 6-phosphate = D-fructose 6-phosphate. Its pathway is nucleotide-sugar biosynthesis; GDP-alpha-D-mannose biosynthesis; alpha-D-mannose 1-phosphate from D-fructose 6-phosphate: step 1/2. Its function is as follows. Involved in the synthesis of the GDP-mannose and dolichol-phosphate-mannose required for a number of critical mannosyl transfer reactions. The chain is Mannose-6-phosphate isomerase (pmi1) from Aspergillus fumigatus (strain ATCC MYA-4609 / CBS 101355 / FGSC A1100 / Af293) (Neosartorya fumigata).